We begin with the raw amino-acid sequence, 189 residues long: MAATTTMATLNLPSLTSHPNSSTFPKHPQPLQFPFRTTTNPISLSSTRTTRLRPIAAVEAPEKIEQLGTQLSGLTLEEARVLVDWLQDKLGVSAASFAPAAAVAAPGAPADAAPAVEEKTEFDVSIDEVPSNARISVIKAVRALTSLGLKEAKELIEGLPKKLKEGVSKDDAEDAKKQLEDAGAKVSIV.

Disordered stretches follow at residues 1 to 30 and 165 to 189; these read MAAT…HPQP and EGVS…VSIV. The transit peptide at 1–56 directs the protein to the chloroplast; sequence MAATTTMATLNLPSLTSHPNSSTFPKHPQPLQFPFRTTTNPISLSSTRTTRLRPIA. Residues 11–24 show a composition bias toward polar residues; it reads NLPSLTSHPNSSTF. Residues 165-183 show a composition bias toward basic and acidic residues; the sequence is EGVSKDDAEDAKKQLEDAG.

In terms of assembly, component of the chloroplast large ribosomal subunit (LSU). Mature 70S chloroplast ribosomes of higher plants consist of a small (30S) and a large (50S) subunit. The 30S small subunit contains 1 molecule of ribosomal RNA (16S rRNA) and 24 different proteins. The 50S large subunit contains 3 rRNA molecules (23S, 5S and 4.5S rRNA) and 33 different proteins.

It is found in the plastid. Its subcellular location is the chloroplast. Functionally, component of the chloroplast ribosome (chloro-ribosome), a dedicated translation machinery responsible for the synthesis of chloroplast genome-encoded proteins, including proteins of the transcription and translation machinery and components of the photosynthetic apparatus. The polypeptide is Large ribosomal subunit protein bL12c (RPL12) (Spinacia oleracea (Spinach)).